The sequence spans 289 residues: Ribonuclease Z (289 aa).

7 residues coordinate Zn(2+): His-63, His-65, Asp-67, His-68, His-143, Asp-197, and His-255. Residue Asp-67 is the Proton acceptor of the active site.

This sequence belongs to the RNase Z family. Homodimer. Requires Zn(2+) as cofactor.

The enzyme catalyses Endonucleolytic cleavage of RNA, removing extra 3' nucleotides from tRNA precursor, generating 3' termini of tRNAs. A 3'-hydroxy group is left at the tRNA terminus and a 5'-phosphoryl group is left at the trailer molecule.. Its function is as follows. Zinc phosphodiesterase, which displays some tRNA 3'-processing endonuclease activity. Probably involved in tRNA maturation, by removing a 3'-trailer from precursor tRNA. This Azobacteroides pseudotrichonymphae genomovar. CFP2 protein is Ribonuclease Z.